The primary structure comprises 247 residues: Probable 2-phosphosulfolactate phosphatase (247 aa).

Belongs to the ComB family. Requires Mg(2+) as cofactor.

The enzyme catalyses (2R)-O-phospho-3-sulfolactate + H2O = (2R)-3-sulfolactate + phosphate. The sequence is that of Probable 2-phosphosulfolactate phosphatase from Clostridium perfringens (strain 13 / Type A).